The sequence spans 173 residues: Small ribosomal subunit protein uS4c (173 aa).

One can recognise an S4 RNA-binding domain in the interval 94–155 (SRLDSKIYRS…TKLTSELIEK (62 aa)).

This sequence belongs to the universal ribosomal protein uS4 family. As to quaternary structure, part of the 30S ribosomal subunit. Contacts protein S5. The interaction surface between S4 and S5 is involved in control of translational fidelity.

Its subcellular location is the plastid. One of the primary rRNA binding proteins, it binds directly to 16S rRNA where it nucleates assembly of the body of the 30S subunit. Functionally, with S5 and S12 plays an important role in translational accuracy. This Helicosporidium sp. subsp. Simulium jonesii (Green alga) protein is Small ribosomal subunit protein uS4c (rps4).